A 179-amino-acid polypeptide reads, in one-letter code: MAKLHDYYKDEVVKQLMSQFGYDSVMQVPRVEKITLNMGVGEAIADKKLLDNAAADLAAISGQKPFITKARKSVAGFKIRQGYPIGCKVTLRGERMWEFFERLITIAVPRIRDFRGLSAKSFDGRGNYSMGVREQIIFPEIDYDKVDRVRGLDITITTTAKSDDEGRALLAAFKFPFRK.

The protein belongs to the universal ribosomal protein uL5 family. In terms of assembly, part of the 50S ribosomal subunit; part of the 5S rRNA/L5/L18/L25 subcomplex. Contacts the 5S rRNA and the P site tRNA. Forms a bridge to the 30S subunit in the 70S ribosome.

In terms of biological role, this is one of the proteins that bind and probably mediate the attachment of the 5S RNA into the large ribosomal subunit, where it forms part of the central protuberance. In the 70S ribosome it contacts protein S13 of the 30S subunit (bridge B1b), connecting the 2 subunits; this bridge is implicated in subunit movement. Contacts the P site tRNA; the 5S rRNA and some of its associated proteins might help stabilize positioning of ribosome-bound tRNAs. This Yersinia pestis protein is Large ribosomal subunit protein uL5.